The sequence spans 156 residues: Transcription antitermination protein NusB (156 aa).

This sequence belongs to the NusB family.

Its function is as follows. Involved in transcription antitermination. Required for transcription of ribosomal RNA (rRNA) genes. Binds specifically to the boxA antiterminator sequence of the ribosomal RNA (rrn) operons. The protein is Transcription antitermination protein NusB of Mycolicibacterium paratuberculosis (strain ATCC BAA-968 / K-10) (Mycobacterium paratuberculosis).